The following is a 95-amino-acid chain: Small ubiquitin-related modifier 2 (95 aa).

Lys11 participates in a covalent cross-link: Glycyl lysine isopeptide (Lys-Gly) (interchain with G-Cter in SUMO). The 80-residue stretch at 16 to 95 (DHINLKVAGQ…VFQQQTGGSF (80 aa)) folds into the Ubiquitin-like domain. Gly93 participates in a covalent cross-link: Glycyl lysine isopeptide (Gly-Lys) (interchain with K-? in acceptor proteins). A propeptide spanning residues 94-95 (SF) is cleaved from the precursor.

Belongs to the ubiquitin family. SUMO subfamily. In terms of assembly, interacts with sae2 and ube2i. Covalently attached to a number of proteins, including top2. Post-translationally, polymeric chains can be formed through Lys-11 cross-linking. In terms of processing, cleavage of precursor form by a sentrin-specific protease is necessary for function.

It is found in the nucleus. Functionally, ubiquitin-like protein that can be covalently attached to proteins as a monomer or as a lysine-linked polymer. Covalent attachment via an isopeptide bond to its substrates requires prior activation by the E1 complex sae1-sae2 and linkage to the E2 enzyme ube2i, and can be promoted by an E3 ligase such as pias1-4. This post-translational modification on lysine residues of proteins plays a crucial role in a number of cellular processes such as nuclear transport, DNA replication and repair, mitosis and signal transduction. Polymeric sumo2 chains are also susceptible to polyubiquitination which functions as a signal for proteasomal degradation of modified proteins. This Xenopus tropicalis (Western clawed frog) protein is Small ubiquitin-related modifier 2 (sumo2).